The sequence spans 347 residues: 4-hydroxy-2-oxovalerate aldolase 2 (347 aa).

A Pyruvate carboxyltransferase domain is found at 9–259 (ITIVDTTLRD…DTGVDLFPLI (251 aa)). Substrate-binding positions include 17 to 18 (RD), Ser171, and His198. Position 18 (Asp18) interacts with Mn(2+). Mn(2+)-binding residues include His198 and His200. Substrate is bound at residue Tyr289.

The protein belongs to the 4-hydroxy-2-oxovalerate aldolase family.

It carries out the reaction (S)-4-hydroxy-2-oxopentanoate = acetaldehyde + pyruvate. The polypeptide is 4-hydroxy-2-oxovalerate aldolase 2 (Rhodococcus opacus (strain B4)).